Here is a 783-residue protein sequence, read N- to C-terminus: Cation/H(+) antiporter 11 (783 aa).

12 helical membrane passes run 31–51 (VVFGYSLPLLEIQIILIFFCI), 61–81 (IGVSQIVSYMIAGLILGPQLF), 101–120 (AALRCISVFGRLMFTFLMTV), 135–155 (VVIGIVSFFAPLFSLSFLNLF), 175–195 (VIVITQSQILLPSTTYILLEL), 205–225 (LALSASAINDMLGIFAMIVAT), 244–264 (AVIIFFLIVFFVFKPMVQWII), 276–295 (IYIHAVILTAFASAAYFVFF), 300–322 (VLGPLIIGIIIPEGPPLGSALEA), 360–380 (IFLTLLILVIKLVACLTLCLY), 389–409 (LAVSLILSYKSFVEFVLYEAV), and 418–438 (ATYAFLILYSLLSAGIVPMVV).

It belongs to the monovalent cation:proton antiporter 2 (CPA2) transporter (TC 2.A.37) family. CHX (TC 2.A.37.4) subfamily. As to expression, specifically expressed in pollen.

It localises to the membrane. Its function is as follows. May operate as a cation/H(+) antiporter. The sequence is that of Cation/H(+) antiporter 11 (CHX11) from Arabidopsis thaliana (Mouse-ear cress).